A 188-amino-acid polypeptide reads, in one-letter code: uncharacterized protein (188 aa).

S14 is modified (phosphoserine). The tract at residues R165–H188 is disordered. Over residues K171–H188 the composition is skewed to basic residues.

The protein resides in the nucleus. It is found in the nucleolus. This is an uncharacterized protein from Schizosaccharomyces pombe (strain 972 / ATCC 24843) (Fission yeast).